Reading from the N-terminus, the 524-residue chain is uncharacterized protein (524 aa).

The first 21 residues, 1-21 (MLLRSVWYKLGSLLIILPLTG), serve as a signal peptide directing secretion. Cys22 carries N-palmitoyl cysteine lipidation. A lipid anchor (S-diacylglycerol cysteine) is attached at Cys22.

Belongs to the MG067/MG068/MG395 family.

The protein resides in the cell membrane. This is an uncharacterized protein from Mycoplasma pneumoniae (strain ATCC 29342 / M129 / Subtype 1) (Mycoplasmoides pneumoniae).